The primary structure comprises 293 residues: MEIKKGTWIIKKGFAEMFKGGVIMDVTSAEQAKIAEEAGAVAVMALERVPADIRKEGGVARMASIAKIREIMEAVSIPVMAKVRIGHIAEAKILEELGVDFIDESEVLTPADDRFHINKHEFKVPFVCGARDLGEALRRIAEGAAMIRTKGEAGTGNVVEAVKHMRRVMEQIKQVTKMEDEELVAYGKEIGAPVELLREVKRLGRLPVVNFAAGGVATPADAALMMMLGADGVFVGSGIFKSKDPRKMAKAMVLAVTYWDNPRILLKISEDIGEPMRGLDVEELEVRMQERGW.

Aspartate 25 is a D-ribose 5-phosphate binding site. The active-site Schiff-base intermediate with D-ribose 5-phosphate is the lysine 82. A D-ribulose 5-phosphate-binding site is contributed by aspartate 103. Glycine 154 contacts D-ribose 5-phosphate. Arginine 166 serves as a coordination point for D-glyceraldehyde 3-phosphate. D-ribose 5-phosphate contacts are provided by residues glycine 215 and 236-237 (GS).

It belongs to the PdxS/SNZ family. As to quaternary structure, homohexamer and homododecamer. In the presence of PdxT, forms a dodecamer of heterodimers.

It catalyses the reaction aldehydo-D-ribose 5-phosphate + D-glyceraldehyde 3-phosphate + L-glutamine = pyridoxal 5'-phosphate + L-glutamate + phosphate + 3 H2O + H(+). Its pathway is cofactor biosynthesis; pyridoxal 5'-phosphate biosynthesis. In terms of biological role, catalyzes the formation of pyridoxal 5'-phosphate from ribose 5-phosphate (RBP), glyceraldehyde 3-phosphate (G3P) and ammonia. The ammonia is provided by the PdxT subunit. Can also use ribulose 5-phosphate and dihydroxyacetone phosphate as substrates, resulting from enzyme-catalyzed isomerization of RBP and G3P, respectively. The protein is Pyridoxal 5'-phosphate synthase subunit PdxS of Thermotoga maritima (strain ATCC 43589 / DSM 3109 / JCM 10099 / NBRC 100826 / MSB8).